Reading from the N-terminus, the 201-residue chain is Putative pseudouridine methyltransferase (201 aa).

Methionine 132 and cysteine 186 together coordinate S-adenosyl-L-methionine.

It belongs to the methyltransferase superfamily. TrmY family.

Its subcellular location is the cytoplasm. The sequence is that of Putative pseudouridine methyltransferase from Vibrio cholerae serotype O1 (strain ATCC 39315 / El Tor Inaba N16961).